The chain runs to 533 residues: MDSDEGYNYEFDDEEEEEEEEEECSVDSGEEEAVDDSLELGEVELLDPAVAGGEPDDCADTGGGGPGPGQEDEDYRFEVLTTEQILQHMVECIRDVNEVIQNPATITRILLSHFNWDKEKLMERYFDGNLDKLFSECHVINPSKKPKTRPMSTRSSSQDLPCQICYLNYPNSYFTGLECGHKFCMQCWGDYLTTKIIEEGMGQTISCPAHNCDILVDDNTVMRLITDSKVKLKYQHLITNSFVECNRLLKWCPAPDCHHVVKVQYPDAKPVRCKCGRQFCFNCGENWHDPVKCKWLRKWIKKCDDDSETSNWIAANTKECPKCHVTIEKDGGCNHMVCRNQNCKAEFCWVCLGPWEPHGSAWYNCNRYNEDDAKAARDAQERSRAALQRYLFYCNRYMNHMQSLRFEHKLYAQVKQKMEEMQQHNMSWIEVQFLKKAVDVLCQCRSTLMFTYVFAFYLKKNNQSIIFENNQADLENATEVLSGYLERDISQDSLQDIKQKVQDKYRYCESRRRVLLQHVHEGYEKDLWEYIED.

Disordered stretches follow at residues 1-35 and 48-73; these read MDSD…EAVD and PAVA…QEDE. Positions 158 to 369 are TRIAD supradomain; sequence QDLPCQICYL…SAWYNCNRYN (212 aa). Residues cysteine 162, cysteine 165, cysteine 179, histidine 181, cysteine 184, cysteine 187, cysteine 207, cysteine 212, cysteine 252, cysteine 257, cysteine 273, cysteine 275, cysteine 280, cysteine 283, histidine 288, cysteine 293, cysteine 320, and cysteine 323 each coordinate Zn(2+). The RING-type 1 zinc-finger motif lies at 162–212; the sequence is CQICYLNYPNSYFTGLECGHKFCMQCWGDYLTTKIIEEGMGQTISCPAHNC. An IBR-type zinc finger spans residues 232 to 293; the sequence is LKYQHLITNS…GENWHDPVKC (62 aa). The segment at 320–351 adopts an RING-type 2; atypical zinc-finger fold; it reads CPKCHVTIEKDGGCNHMVCRNQNCKAEFCWVC. Residue cysteine 333 is part of the active site. Residues cysteine 338, cysteine 343, cysteine 348, cysteine 351, histidine 358, and cysteine 365 each contribute to the Zn(2+) site. The stretch at 409–425 forms a coiled coil; sequence KLYAQVKQKMEEMQQHN.

This sequence belongs to the RBR family. Ariadne subfamily.

Its subcellular location is the cytoplasm. The catalysed reaction is [E2 ubiquitin-conjugating enzyme]-S-ubiquitinyl-L-cysteine + [acceptor protein]-L-lysine = [E2 ubiquitin-conjugating enzyme]-L-cysteine + [acceptor protein]-N(6)-ubiquitinyl-L-lysine.. Its pathway is protein modification; protein ubiquitination. Its function is as follows. E3 ubiquitin-protein ligase, which catalyzes polyubiquitination of target proteins together with ubiquitin-conjugating enzyme E2 ube2l3. In Danio rerio (Zebrafish), this protein is E3 ubiquitin-protein ligase arih1l (arih1l).